The chain runs to 160 residues: Protein-export protein SecB (160 aa).

It belongs to the SecB family. In terms of assembly, homotetramer, a dimer of dimers. One homotetramer interacts with 1 SecA dimer.

Its subcellular location is the cytoplasm. Functionally, one of the proteins required for the normal export of preproteins out of the cell cytoplasm. It is a molecular chaperone that binds to a subset of precursor proteins, maintaining them in a translocation-competent state. It also specifically binds to its receptor SecA. This chain is Protein-export protein SecB, found in Azorhizobium caulinodans (strain ATCC 43989 / DSM 5975 / JCM 20966 / LMG 6465 / NBRC 14845 / NCIMB 13405 / ORS 571).